The chain runs to 512 residues: Cytoplasmic tRNA 2-thiolation protein 2-B (512 aa).

The interval 196–215 is disordered; sequence VTDSDSPGSSDKMYQSTCSR. Residues 199 to 214 show a composition bias toward polar residues; it reads SDSPGSSDKMYQSTCS.

This sequence belongs to the CTU2/NCS2 family.

It is found in the cytoplasm. It participates in tRNA modification; 5-methoxycarbonylmethyl-2-thiouridine-tRNA biosynthesis. Plays a central role in 2-thiolation of mcm(5)S(2)U at tRNA wobble positions of tRNA(Lys), tRNA(Glu) and tRNA(Gln). May act by forming a heterodimer with ctu1/atpbd3 that ligates sulfur from thiocarboxylated urm1 onto the uridine of tRNAs at wobble position. The polypeptide is Cytoplasmic tRNA 2-thiolation protein 2-B (ctu2-b) (Xenopus laevis (African clawed frog)).